The primary structure comprises 529 residues: Pre-rRNA-processing protein pro-1 (529 aa).

WD repeat units follow at residues 136–175 (AHYQ…SADR) and 287–326 (GHSD…CLKV). Residues 416–518 (ARNEAAKAEK…LKEINKQMYE (103 aa)) adopt a coiled-coil conformation. Positions 436–470 (TLGDDEDDAPEVGNQRRKSGKKNKKNRKNQKKNDF) are disordered. Over residues 450–465 (QRRKSGKKNKKNRKNQ) the composition is skewed to basic residues.

Belongs to the WD repeat IPI3/WDR18 family. In terms of assembly, component of the PELP1 complex, composed of at least PELP1, TEX10 and WDR18. The complex interacts with pre-60S ribosome particles.

It localises to the nucleus. It is found in the nucleolus. The protein localises to the nucleoplasm. Functionally, component of the PELP1 complex involved in the nucleolar steps of 28S rRNA maturation and the subsequent nucleoplasmic transit of the pre-60S ribosomal subunit. Required for processing ITS2 sequences from rRNA intermediates during 26S rRNA maturation. Required in the soma to promote normal proliferation and prevent germline tumor formation. In Caenorhabditis elegans, this protein is Pre-rRNA-processing protein pro-1.